A 696-amino-acid polypeptide reads, in one-letter code: DNA-directed RNA polymerase subunit beta' (696 aa).

Positions 69, 71, 87, and 90 each coordinate Zn(2+). Positions 504, 506, and 508 each coordinate Mg(2+).

It belongs to the RNA polymerase beta' chain family. RpoC1 subfamily. In plastids the minimal PEP RNA polymerase catalytic core is composed of four subunits: alpha, beta, beta', and beta''. When a (nuclear-encoded) sigma factor is associated with the core the holoenzyme is formed, which can initiate transcription. Mg(2+) is required as a cofactor. Zn(2+) serves as cofactor.

The protein resides in the plastid. The protein localises to the chloroplast. It catalyses the reaction RNA(n) + a ribonucleoside 5'-triphosphate = RNA(n+1) + diphosphate. Its function is as follows. DNA-dependent RNA polymerase catalyzes the transcription of DNA into RNA using the four ribonucleoside triphosphates as substrates. In Pinus koraiensis (Korean pine), this protein is DNA-directed RNA polymerase subunit beta'.